Here is a 36-residue protein sequence, read N- to C-terminus: U14-myrmicitoxin-Tb1a (36 aa).

Residues 1-23 (MKIIKLITIFTMMATLMXXVANG) form the signal peptide. Residues 24-25 (EP) constitute a propeptide that is removed on maturation. Residue Q35 is modified to Glutamine amide.

In terms of tissue distribution, expressed by the venom gland.

Its subcellular location is the secreted. Its function is as follows. Venom protein with unknown function. Does not induce paralysis when a high dose is administered by intrathoracic injection into the blowfly Lucilia caesar. This Tetramorium bicarinatum (Tramp ant) protein is U14-myrmicitoxin-Tb1a.